A 397-amino-acid chain; its full sequence is CCA-adding enzyme (397 aa).

ATP contacts are provided by Gly26 and Arg29. Residues Gly26 and Arg29 each coordinate CTP. Mg(2+) contacts are provided by Asp39 and Asp41. 5 residues coordinate ATP: Arg110, Asp153, Arg156, Arg159, and Arg162. The CTP site is built by Arg110, Asp153, Arg156, Arg159, and Arg162.

This sequence belongs to the tRNA nucleotidyltransferase/poly(A) polymerase family. Bacterial CCA-adding enzyme type 3 subfamily. Homodimer. The cofactor is Mg(2+).

It catalyses the reaction a tRNA precursor + 2 CTP + ATP = a tRNA with a 3' CCA end + 3 diphosphate. It carries out the reaction a tRNA with a 3' CCA end + 2 CTP + ATP = a tRNA with a 3' CCACCA end + 3 diphosphate. In terms of biological role, catalyzes the addition and repair of the essential 3'-terminal CCA sequence in tRNAs without using a nucleic acid template. Adds these three nucleotides in the order of C, C, and A to the tRNA nucleotide-73, using CTP and ATP as substrates and producing inorganic pyrophosphate. tRNA 3'-terminal CCA addition is required both for tRNA processing and repair. Also involved in tRNA surveillance by mediating tandem CCA addition to generate a CCACCA at the 3' terminus of unstable tRNAs. While stable tRNAs receive only 3'-terminal CCA, unstable tRNAs are marked with CCACCA and rapidly degraded. The sequence is that of CCA-adding enzyme from Bacillus cereus (strain G9842).